A 358-amino-acid polypeptide reads, in one-letter code: UDP-3-O-acylglucosamine N-acyltransferase (358 aa).

The active-site Proton acceptor is the histidine 248.

It belongs to the transferase hexapeptide repeat family. LpxD subfamily. Homotrimer.

The catalysed reaction is a UDP-3-O-[(3R)-3-hydroxyacyl]-alpha-D-glucosamine + a (3R)-hydroxyacyl-[ACP] = a UDP-2-N,3-O-bis[(3R)-3-hydroxyacyl]-alpha-D-glucosamine + holo-[ACP] + H(+). It participates in bacterial outer membrane biogenesis; LPS lipid A biosynthesis. Functionally, catalyzes the N-acylation of UDP-3-O-acylglucosamine using 3-hydroxyacyl-ACP as the acyl donor. Is involved in the biosynthesis of lipid A, a phosphorylated glycolipid that anchors the lipopolysaccharide to the outer membrane of the cell. The chain is UDP-3-O-acylglucosamine N-acyltransferase from Synechococcus sp. (strain WH7803).